A 446-amino-acid chain; its full sequence is Histidine--tRNA ligase (446 aa).

The protein belongs to the class-II aminoacyl-tRNA synthetase family. As to quaternary structure, homodimer.

It localises to the cytoplasm. The catalysed reaction is tRNA(His) + L-histidine + ATP = L-histidyl-tRNA(His) + AMP + diphosphate + H(+). The protein is Histidine--tRNA ligase of Burkholderia cenocepacia (strain HI2424).